We begin with the raw amino-acid sequence, 488 residues long: Glutamyl-tRNA(Gln) amidotransferase subunit A (488 aa).

Active-site charge relay system residues include lysine 80 and serine 155. The active-site Acyl-ester intermediate is serine 179.

It belongs to the amidase family. GatA subfamily. Heterotrimer of A, B and C subunits.

It catalyses the reaction L-glutamyl-tRNA(Gln) + L-glutamine + ATP + H2O = L-glutaminyl-tRNA(Gln) + L-glutamate + ADP + phosphate + H(+). In terms of biological role, allows the formation of correctly charged Gln-tRNA(Gln) through the transamidation of misacylated Glu-tRNA(Gln) in organisms which lack glutaminyl-tRNA synthetase. The reaction takes place in the presence of glutamine and ATP through an activated gamma-phospho-Glu-tRNA(Gln). This Chloroflexus aggregans (strain MD-66 / DSM 9485) protein is Glutamyl-tRNA(Gln) amidotransferase subunit A.